Consider the following 652-residue polypeptide: Protein high chlorophyll fluorescent 107 (652 aa).

Disordered regions lie at residues 1–21 (MHFF…NTSS) and 78–121 (VFSP…EGKK). A chloroplast-targeting transit peptide spans 1 to 68 (MHFFFVPNSS…TFSSKNTYLY (68 aa)). Positions 105–121 (PLLENSDKESSEEEGKK) are enriched in basic and acidic residues. 12 TPR repeats span residues 168–201 (LDLS…WPED), 202–235 (GRPY…TQGE), 237–270 (SYIW…DKKH), 271–304 (VAAW…CGRN), 305–338 (EYIY…NSRS), 339–372 (CASW…SPKN), 374–406 (FAWH…NPRD), 407–440 (PVLL…DPRH), 441–474 (QPVW…DANT), 478–511 (SRCL…NSQS), 543–576 (TEVV…GQNN), and 598–631 (QQPE…DPLK). The segment at 585-610 (LRNMNRTKDSQSNQQPESSAGREDIE) is disordered.

As to quaternary structure, may form homomultimers. Part of a multi-subunit complex in the range of 60-190 and 600-800 kDa in chloroplast membranes.

The protein resides in the plastid. Its subcellular location is the chloroplast. It localises to the chloroplast membrane. It is found in the chloroplast stroma. Its function is as follows. Involved, directly or indirectly, in the processing of chloroplast encoded mRNAs. Exhibits sequence-specific RNA binding and RNA remodeling activities, probably leading to the activation of translation of the target gene cluster psbB-psbT-psbH-petB-petD. Blocks 5'-3' and 3'-5' exoribonucleases (e.g. polynucleotide phosphorylase (PNPase), RNase R) in vitro. Necessary for intercistronic RNA processing of the psbH 5' untranslated region or the stabilization of 5' processed psbH RNAs. Also required for the synthesis of psbB. This chain is Protein high chlorophyll fluorescent 107, found in Arabidopsis thaliana (Mouse-ear cress).